Here is a 105-residue protein sequence, read N- to C-terminus: uncharacterized protein (105 aa).

The next 3 helical transmembrane spans lie at 3–23, 41–61, and 63–83; these read ISPL…QALF, DLVN…ALVS, and AFPV…TFIY.

It is found in the cell membrane. This is an uncharacterized protein from Methanocaldococcus jannaschii (strain ATCC 43067 / DSM 2661 / JAL-1 / JCM 10045 / NBRC 100440) (Methanococcus jannaschii).